The following is a 255-amino-acid chain: ATP synthase subunit a (255 aa).

A propeptide spans 1 to 6 (MNFIIN) (removed in mature form). A run of 5 helical transmembrane segments spans residues 32 to 52 (LTSF…FSIL), 91 to 111 (LFPF…VSLV), 121 to 141 (LIWT…TGLA), 159 to 200 (PLVP…LAGL), and 219 to 251 (LSIL…IKDA).

In terms of assembly, F-type ATP synthases have 2 components, the catalytic core F(1) and the membrane-embedded component F(0), linked together by a central stalk and a peripheral stalk. The central stalk, also called rotor shaft, is often seen as part of F(1). The peripheral stalk is seen as part of F(0). F(0) contains the membrane channel next to the rotor. F-type ATP synthases form dimers but each monomer functions independently in ATP generation. The dimer consists of 17 different polypeptides: ATP1 (subunit alpha, 3 molecules per monomer, part of F(1)), ATP2 (subunit beta, 3 copies per monomer, part of F(1)), ATP3 (subunit gamma, part of the central stalk), ATP4 (subunit b, part of the peripheral stalk), ATP5/OSCP (subunit 5/OSCP, part of the peripheral stalk), ATP6 (subunit a, part of the peripheral stalk), ATP7 (subunit d, part of the peripheral stalk), ATP8 (subunit 8, part of the peripheral stalk), OLI1 (subunit c, part of the rotor, 10 molecules per monomer), ATP14 (subunit h, part of the peripheral stalk), ATP15 (subunit epsilon, part of the central stalk), ATP16 (subunit delta, part of the central stalk), ATP17 (subunit f, part of the peripheral stalk), ATP18 (subunit i/j, part of the peripheral stalk), ATP19 (subunit k, dimer-specific, at interface between monomers), ATP20 (subunit g, at interface between monomers), TIM11 (subunit e, at interface between monomers).

It is found in the mitochondrion inner membrane. In terms of biological role, mitochondrial membrane ATP synthase (F(1)F(0) ATP synthase or Complex V) produces ATP from ADP in the presence of a proton gradient across the membrane which is generated by electron transport complexes of the respiratory chain. F-type ATP synthases consist of two structural domains, F(1) - containing the extramembraneous catalytic core, and F(0) - containing the membrane proton channel, linked together by a central stalk and a peripheral stalk. During catalysis, ATP synthesis in the catalytic domain of F(1) is coupled via a rotary mechanism of the central stalk subunits to proton translocation. Key component of the proton channel; it may play a direct role in the translocation of protons across the membrane. The sequence is that of ATP synthase subunit a from Yarrowia lipolytica (strain CLIB 122 / E 150) (Yeast).